A 130-amino-acid chain; its full sequence is Flagellar assembly factor FliW (130 aa).

Belongs to the FliW family. Interacts with translational regulator CsrA and flagellin(s).

The protein resides in the cytoplasm. Acts as an anti-CsrA protein, binds CsrA and prevents it from repressing translation of its target genes, one of which is flagellin. Binds to flagellin and participates in the assembly of the flagellum. The polypeptide is Flagellar assembly factor FliW (Borrelia duttonii (strain Ly)).